The sequence spans 327 residues: Metapyrocatechase (327 aa).

VOC domains follow at residues 14-126 (QLAH…IFFE) and 156-276 (RLDH…LFGD). Positions 159, 221, and 272 each coordinate Fe cation.

It belongs to the extradiol ring-cleavage dioxygenase family. Fe(2+) serves as cofactor.

The enzyme catalyses catechol + O2 = (2Z,4E)-2-hydroxy-6-oxohexa-2,4-dienoate + H(+). The protein is Metapyrocatechase (pheB) of Geobacillus stearothermophilus (Bacillus stearothermophilus).